The following is a 133-amino-acid chain: Large ribosomal subunit protein bL17 (133 aa).

It belongs to the bacterial ribosomal protein bL17 family. As to quaternary structure, part of the 50S ribosomal subunit. Contacts protein L32.

This chain is Large ribosomal subunit protein bL17, found in Verminephrobacter eiseniae (strain EF01-2).